A 715-amino-acid polypeptide reads, in one-letter code: Putative pentatricopeptide repeat-containing protein At3g23330 (715 aa).

PPR repeat units follow at residues 38-68 (SHTSASIVISIYTNLKLLHEALLLFKTLKSP), 69-103 (PVLAWKSVIRCFTDQSLFSKALASFVEMRASGRCP), 104-138 (DHNVFPSVLKSCTMMMDLRFGESVHGFIVRLGMDC), 139-172 (DLYTGNALMNMYAKLLGMGSKISVGNVFDEMPQR), 206-240 (DVVSYNTIIAGYAQSGMYEDALRMVREMGTTDLKP), 241-275 (DSFTLSSVLPIFSEYVDVIKGKEIHGYVIRKGIDS), 276-306 (DVYIGSSLVDMYAKSARIEDSERVFSRLYCR), 307-341 (DGISWNSLVAGYVQNGRYNEALRLFRQMVTAKVKP), 342-376 (GAVAFSSVIPACAHLATLHLGKQLHGYVLRGGFGS), 377-407 (NIFIASALVDMYSKCGNIKAARKIFDRMNVL), 408-442 (DEVSWTAIIMGHALHGHGHEAVSLFEEMKRQGVKP), 443-473 (NQVAFVAVLTACSHVGLVDEAWGYFNSMTKV), and 479-509 (ELEHYAAVADLLGRAGKLEEAYNFISKMCVE). Positions 514 to 589 (VWSTLLSSCS…KPACSWIEMK (76 aa)) are type E motif. Residues 590-620 (NKTHGFVSGDRSHPSMDKINEFLKAVMEQME) are type E(+) motif. Residues 621–715 (KEGYVADTSG…RGNCSCGDYW (95 aa)) are type DYW motif.

The protein belongs to the PPR family. PCMP-H subfamily.

This Arabidopsis thaliana (Mouse-ear cress) protein is Putative pentatricopeptide repeat-containing protein At3g23330 (PCMP-H32).